An 822-amino-acid chain; its full sequence is Fibroblast growth factor receptor 1 (822 aa).

The signal sequence occupies residues 1-21 (MWGWRGLLFWAVLVTATLCTA). The Extracellular portion of the chain corresponds to 22–376 (RPAPTLPEQA…AVMTSPLYLE (355 aa)). The Ig-like C2-type 1 domain maps to 25 to 119 (PTLPEQAQPW…DTTYFSVNVS (95 aa)). Cys-55 and Cys-101 are oxidised to a cystine. N-linked (GlcNAc...) asparagine glycans are attached at residues Asn-77 and Asn-117. Positions 120 to 162 (DALPSSEDDDDDDDSSSEEKETDNTKPNRRPVAPYWTSPEKME) are disordered. Over residues 125-135 (SEDDDDDDDSS) the composition is skewed to acidic residues. Over residues 136 to 145 (SEEKETDNTK) the composition is skewed to basic and acidic residues. Ig-like C2-type domains follow at residues 158-246 (PEKM…YQLD) and 255-357 (PILQ…AWLT). The tract at residues 160-177 (KMEKKLHAVPAAKTVKFK) is heparin-binding. Cys-178 and Cys-230 are joined by a disulfide. N-linked (GlcNAc...) asparagine glycans are attached at residues Asn-227, Asn-240, Asn-264, Asn-296, Asn-317, and Asn-330. Cys-277 and Cys-341 form a disulfide bridge. The helical transmembrane segment at 377–397 (IIIYCTGAFLISCMVGSVIIY) threads the bilayer. The Cytoplasmic segment spans residues 398-822 (KMKSGTKKSD…QLANGGLNRR (425 aa)). Tyr-463 bears the Phosphotyrosine; by autocatalysis mark. The region spanning 478–767 (LVLGKPLGEG…VALTSNQEYL (290 aa)) is the Protein kinase domain. Residues 484-490 (LGEGCFG), Lys-514, 562-564 (EYA), and Asn-568 each bind ATP. Phosphotyrosine; by autocatalysis occurs at positions 583 and 585. The active-site Proton acceptor is Asp-623. Positions 627 and 641 each coordinate ATP. A phosphotyrosine; by autocatalysis mark is found at Tyr-653, Tyr-654, Tyr-730, and Tyr-766. Residues 770–822 (SMPLDQDSPSFPDTRSSTCSSGEDSVFSHEPFPEEPCLPRHPTQLANGGLNRR) form a disordered region. The span at 776–792 (DSPSFPDTRSSTCSSGE) shows a compositional bias: polar residues.

The protein belongs to the protein kinase superfamily. Tyr protein kinase family. Fibroblast growth factor receptor subfamily. In terms of assembly, monomer. Homodimer after ligand binding. Interacts predominantly with FGF1 and FGF2, but can also interact with FGF3, FGF4, FGF5, FGF6, FGF8, FGF10, FGF19, FGF21, FGF22 and FGF23 (in vitro). Ligand specificity is determined by tissue-specific expression of isoforms, and differences in the third Ig-like domain are crucial for ligand specificity. Affinity for fibroblast growth factors (FGFs) is increased by heparan sulfate glycosaminoglycans that function as coreceptors. Likewise, KLB increases the affinity for FGF19, FGF21 and FGF23. Interacts (phosphorylated on Tyr-766) with PLCG1 (via SH2 domains). Interacts with FRS2. Interacts (via C-terminus) with NEDD4 (via WW3 domain). Interacts with RPS6KA1. Interacts with KL. Interacts with SHB (via SH2 domain) and GRB10. Interacts with ANOS1; this interaction does not interfere with FGF2-binding to FGFR1, but prevents binding of heparin-bound FGF2. Interacts with SOX2 and SOX3. Interacts with FLRT1, FLRT2 and FLRT3. Found in a ternary complex with FGF1 and ITGAV:ITGB3. In terms of processing, autophosphorylated. Binding of FGF family members together with heparan sulfate proteoglycan or heparin promotes receptor dimerization and autophosphorylation on tyrosine residues. Autophosphorylation occurs in trans between the two FGFR molecules present in the dimer and proceeds in a highly ordered manner. Initial autophosphorylation at Tyr-653 increases the kinase activity by a factor of 50 to 100. After this, Tyr-583 becomes phosphorylated, followed by phosphorylation of Tyr-463, Tyr-766, Tyr-583 and Tyr-585. In a third stage, Tyr-654 is autophosphorylated, resulting in a further tenfold increase of kinase activity. Phosphotyrosine residues provide docking sites for interacting proteins and so are crucial for FGFR1 function and its regulation. Ubiquitinated. FGFR1 is rapidly ubiquitinated by NEDD4 after autophosphorylation, leading to internalization and lysosomal degradation. CBL is recruited to activated FGFR1 via FRS2 and GRB2, and mediates ubiquitination and subsequent degradation of FGFR1. Post-translationally, N-glycosylated in the endoplasmic reticulum. The N-glycan chains undergo further maturation to an Endo H-resistant form in the Golgi apparatus. Expressed in the parathyroid.

It is found in the cell membrane. The protein resides in the nucleus. It localises to the cytoplasm. Its subcellular location is the cytosol. The protein localises to the cytoplasmic vesicle. It catalyses the reaction L-tyrosyl-[protein] + ATP = O-phospho-L-tyrosyl-[protein] + ADP + H(+). Present in an inactive conformation in the absence of bound ligand. Ligand binding leads to dimerization and activation by sequential autophosphorylation on tyrosine residues. In terms of biological role, tyrosine-protein kinase that acts as a cell-surface receptor for fibroblast growth factors and plays an essential role in the regulation of embryonic development, cell proliferation, differentiation and migration. Required for normal mesoderm patterning and correct axial organization during embryonic development, normal skeletogenesis and normal development of the gonadotropin-releasing hormone (GnRH) neuronal system. Phosphorylates PLCG1, FRS2, GAB1 and SHB. Ligand binding leads to the activation of several signaling cascades. Activation of PLCG1 leads to the production of the cellular signaling molecules diacylglycerol and inositol 1,4,5-trisphosphate. Phosphorylation of FRS2 triggers recruitment of GRB2, GAB1, PIK3R1 and SOS1, and mediates activation of RAS, MAPK1/ERK2, MAPK3/ERK1 and the MAP kinase signaling pathway, as well as of the AKT1 signaling pathway. Promotes phosphorylation of SHC1, STAT1 and PTPN11/SHP2. In the nucleus, enhances RPS6KA1 and CREB1 activity and contributes to the regulation of transcription. FGFR1 signaling is down-regulated by IL17RD/SEF, and by FGFR1 ubiquitination, internalization and degradation. This Rattus norvegicus (Rat) protein is Fibroblast growth factor receptor 1 (Fgfr1).